Reading from the N-terminus, the 774-residue chain is Pentatricopeptide repeat-containing protein At4g20770 (774 aa).

PPR repeat units follow at residues 5-39, 40-70, 71-101, 102-136, 137-171, 172-203, 204-238, 239-270, 283-313, 314-348, 349-379, 380-414, 415-449, 450-480, 482-516, 518-552, 553-583, 584-618, 619-654, and 655-685; these read GNKY…GMKS, DTYL…MSVR, DVYS…MPER, DVVS…GFLP, SRFT…GLDK, NIFV…LSQP, NEVS…GVQV, DSVC…LGKQ, DLHL…MPEV, NVVS…GFQP, NEVT…IPQP, SVSA…NLKP, DKTT…EISK, NSHI…CINE, DIAC…AVLC, NETS…GYVS, DSFV…VLRK, NTVI…GEKP, DGIT…GIEP, and ELDH…TPYK. Positions 690 to 765 are type E motif; that stretch reads LWEILLSSCR…TPGQSWTTYG (76 aa).

It belongs to the PPR family. PCMP-E subfamily.

The protein is Pentatricopeptide repeat-containing protein At4g20770 (PCMP-E35) of Arabidopsis thaliana (Mouse-ear cress).